A 370-amino-acid chain; its full sequence is D-alanine--D-alanine ligase (370 aa).

An ATP-grasp domain is found at 144–352 (KKIFADAGIP…YGALIERLVD (209 aa)). 177–232 (EEVLTYPVFVKPANLGSSVGISKATNKKELVDAMTEAFLYDRRVVVEQGVVAREIE) contacts ATP. Mg(2+)-binding residues include D306, E319, and N321.

Belongs to the D-alanine--D-alanine ligase family. Mg(2+) serves as cofactor. It depends on Mn(2+) as a cofactor.

The protein localises to the cytoplasm. It catalyses the reaction 2 D-alanine + ATP = D-alanyl-D-alanine + ADP + phosphate + H(+). The protein operates within cell wall biogenesis; peptidoglycan biosynthesis. In terms of biological role, cell wall formation. This chain is D-alanine--D-alanine ligase, found in Listeria monocytogenes serovar 1/2a (strain ATCC BAA-679 / EGD-e).